We begin with the raw amino-acid sequence, 577 residues long: Aspartate--tRNA(Asp/Asn) ligase (577 aa).

L-aspartate is bound at residue Glu-171. Positions 195–198 are aspartate; that stretch reads QLFK. Arg-217 lines the L-aspartate pocket. ATP-binding positions include 217 to 219 and Gln-226; that span reads RDE. His-444 contributes to the L-aspartate binding site. Glu-474 provides a ligand contact to ATP. An L-aspartate-binding site is contributed by Arg-481. 526–529 contacts ATP; that stretch reads GFDR.

This sequence belongs to the class-II aminoacyl-tRNA synthetase family. Type 1 subfamily. Homodimer.

It localises to the cytoplasm. It carries out the reaction tRNA(Asx) + L-aspartate + ATP = L-aspartyl-tRNA(Asx) + AMP + diphosphate. Its function is as follows. Aspartyl-tRNA synthetase with relaxed tRNA specificity since it is able to aspartylate not only its cognate tRNA(Asp) but also tRNA(Asn). Is 1.7 times more efficient at aminoacylating tRNA(Asp) over tRNA(Asn). Reaction proceeds in two steps: L-aspartate is first activated by ATP to form Asp-AMP and then transferred to the acceptor end of tRNA(Asp/Asn). This Helicobacter pylori (strain ATCC 700392 / 26695) (Campylobacter pylori) protein is Aspartate--tRNA(Asp/Asn) ligase.